A 353-amino-acid chain; its full sequence is uncharacterized protein (353 aa).

The span at 233–245 (ASCSNNEPSASLE) shows a compositional bias: polar residues. The segment at 233 to 265 (ASCSNNEPSASLESESRHFSPVNSLSPSSLSTD) is disordered. Low complexity predominate over residues 252-263 (SPVNSLSPSSLS).

This is an uncharacterized protein from Saccharomyces cerevisiae (strain ATCC 204508 / S288c) (Baker's yeast).